The following is an 85-amino-acid chain: F(1)-ATPase inhibitor IF(1), mitochondrial (85 aa).

The N-terminal 22 residues, 1-22, are a transit peptide targeting the mitochondrion; the sequence is MLPRSALARSLQLQRGVAARFY. The stretch at 41-84 forms a coiled coil; the sequence is KRERATEDFFVRQREKEQLRHLKEQLEKQRKKIDSLENKIDSMT.

It belongs to the ATPase inhibitor family. As to quaternary structure, monomer and homodimer. The protein aggregates less strongly with increasing pH.

It is found in the mitochondrion. Endogenous ATPase inhibitor, which inhibits specifically the reverse ATPase reaction of mitochondrial F(1)F(0)-type ATP synthase. It limits ATP depletion when the mitochondrial membrane potential falls below a threshold and the F(1)F(0)-ATP synthase starts hydrolyzing ATP to pump protons out of the mitochondrial matrix. Required to avoid the consumption of cellular ATP when the F(1)F(0)-ATP synthase enzyme acts as an ATP hydrolase. Functions through inserting its N-terminal part into the catalytically active F1-ATPase, thereby blocking its rotational movement and subsequently the ATP hydrolase activity. The protein is F(1)-ATPase inhibitor IF(1), mitochondrial (INH1) of Saccharomyces cerevisiae (strain ATCC 204508 / S288c) (Baker's yeast).